The sequence spans 940 residues: MFNLYRSSLKNLKLPNINNNIKSNLVIRSYTTNINGNIKNDDDNNKFYSLSQFPYPSGALHMGHVRVYTISDCIARLKRMQGYDVIHPMGWDAFGLPAENAAIDKQVSPSEWTNLNISSMRDQLKLLNFQFDWDRELSTCNKEYYRWTQEIFLRLLKSGLAYRKSATVNWDPIDQTVLANEQVDAQGRSWRSNAIVEKKEMKQWFYKITSMADRLTDDLDQLPGWSDEIKNMQKEWIGRSYGHLIEFQSCAQKPLSNITVFTTRAETIYGVSFLAISPHHSEINQIRANLINDEKRLELDQYLKEIQEIKNKMGTQEDVENLKTFNTGLTFYQPITKKYIPLILSNFVHADYGTGAVMGVPSHNRSDYQVAKQQNLKLLPVLGIEREQQQQQQQQQQQQQLEIEEECYDYSNTGKLINSGQDTGIEFKEFIKRLEDQQLIKRQTNYRIHDWLISRQRYWGTPIPIIVCEKCGDVPVPSDQLPVELPIDIQFTGKGNLLNQLDHWKNVKCPCCGSQATRETDTMDTFVDSSWYFLRFLDSKNSQSIFSSELVNRFMPIDVYVGGIEHAILHLLYSRFITKFLKDQQLIDHSEPFKVLLAQGLVKSPTYRDSITNKPIHPSNVEFKTIKSNESGKSQQQTINKLTGNQVSVTIEKMSKSKLNGIDPKEIIDKYGSDTLKTYILFKAPPEKSLDWDTQGIEGCKKWLTRINVSIQSFLNQFDVIEGKEQHQHQQQQHQQPLPSSEFNEQQSKEVKDILFETHLTMNKVTESIDKHSFNTGIAALMELSNTLQKSSPQIKLTKEYYQSLRALTLMLFPFSPIFSQIHWKSLIDDLPQSCKSFYSENYSSFEQQSYGNSNDNDVFNQRWPKPTPSALVRDFNSLVIQFDGKTKGVESIPTSITDFSNFVQSNSKYLNRFKDKTIDQIFIGTTKTGNSINFTFKKK.

Residues P54–H64 carry the 'HIGH' region motif. A 'KMSKS' region motif is present at residues T638–L642. ATP is bound at residue K641. Positions K724–N744 are disordered.

This sequence belongs to the class-I aminoacyl-tRNA synthetase family.

Its subcellular location is the mitochondrion. The enzyme catalyses tRNA(Leu) + L-leucine + ATP = L-leucyl-tRNA(Leu) + AMP + diphosphate. The polypeptide is Leucine--tRNA ligase, mitochondrial (mleuS) (Dictyostelium discoideum (Social amoeba)).